A 365-amino-acid polypeptide reads, in one-letter code: Large ribosomal subunit protein uL3 (365 aa).

A disordered region spans residues 343 to 365 (RPPKKKPPVQRPQITYVSVESKQ). The span at 354–365 (PQITYVSVESKQ) shows a compositional bias: polar residues.

Belongs to the universal ribosomal protein uL3 family. Part of the 50S ribosomal subunit. Forms a cluster with proteins L14 and L24e.

One of the primary rRNA binding proteins, it binds directly near the 3'-end of the 23S rRNA, where it nucleates assembly of the 50S subunit. The polypeptide is Large ribosomal subunit protein uL3 (Pyrococcus furiosus (strain ATCC 43587 / DSM 3638 / JCM 8422 / Vc1)).